The primary structure comprises 210 residues: Large ribosomal subunit protein uL3 (210 aa).

The segment at 125–151 is disordered; it reads RHGQSRGPMSHGSRYHRRPGSMGPVAP.

The protein belongs to the universal ribosomal protein uL3 family. As to quaternary structure, part of the 50S ribosomal subunit. Forms a cluster with proteins L14 and L19.

Its function is as follows. One of the primary rRNA binding proteins, it binds directly near the 3'-end of the 23S rRNA, where it nucleates assembly of the 50S subunit. The polypeptide is Large ribosomal subunit protein uL3 (Bacillus cereus (strain ATCC 14579 / DSM 31 / CCUG 7414 / JCM 2152 / NBRC 15305 / NCIMB 9373 / NCTC 2599 / NRRL B-3711)).